We begin with the raw amino-acid sequence, 459 residues long: Bifunctional protein GlmU (459 aa).

The pyrophosphorylase stretch occupies residues 1-230 (MSNRFAVILA…FDETLGVNDR (230 aa)). UDP-N-acetyl-alpha-D-glucosamine contacts are provided by residues 9–12 (LAAG), Lys-23, Gln-73, and 78–79 (GT). Position 103 (Asp-103) interacts with Mg(2+). Positions 140, 155, 170, and 228 each coordinate UDP-N-acetyl-alpha-D-glucosamine. Asn-228 serves as a coordination point for Mg(2+). The interval 231-251 (VALSQAEIIMKNRINRKNMVN) is linker. Residues 252–459 (GVTIIDPSNT…VDQLLNKKKS (208 aa)) are N-acetyltransferase. Positions 333 and 351 each coordinate UDP-N-acetyl-alpha-D-glucosamine. His-363 (proton acceptor) is an active-site residue. Positions 366 and 377 each coordinate UDP-N-acetyl-alpha-D-glucosamine. Residues 386–387 (NY), Ala-423, and Arg-440 contribute to the acetyl-CoA site.

The protein in the N-terminal section; belongs to the N-acetylglucosamine-1-phosphate uridyltransferase family. In the C-terminal section; belongs to the transferase hexapeptide repeat family. As to quaternary structure, homotrimer. It depends on Mg(2+) as a cofactor.

The protein resides in the cytoplasm. It carries out the reaction alpha-D-glucosamine 1-phosphate + acetyl-CoA = N-acetyl-alpha-D-glucosamine 1-phosphate + CoA + H(+). It catalyses the reaction N-acetyl-alpha-D-glucosamine 1-phosphate + UTP + H(+) = UDP-N-acetyl-alpha-D-glucosamine + diphosphate. The protein operates within nucleotide-sugar biosynthesis; UDP-N-acetyl-alpha-D-glucosamine biosynthesis; N-acetyl-alpha-D-glucosamine 1-phosphate from alpha-D-glucosamine 6-phosphate (route II): step 2/2. It participates in nucleotide-sugar biosynthesis; UDP-N-acetyl-alpha-D-glucosamine biosynthesis; UDP-N-acetyl-alpha-D-glucosamine from N-acetyl-alpha-D-glucosamine 1-phosphate: step 1/1. Its pathway is bacterial outer membrane biogenesis; LPS lipid A biosynthesis. Catalyzes the last two sequential reactions in the de novo biosynthetic pathway for UDP-N-acetylglucosamine (UDP-GlcNAc). The C-terminal domain catalyzes the transfer of acetyl group from acetyl coenzyme A to glucosamine-1-phosphate (GlcN-1-P) to produce N-acetylglucosamine-1-phosphate (GlcNAc-1-P), which is converted into UDP-GlcNAc by the transfer of uridine 5-monophosphate (from uridine 5-triphosphate), a reaction catalyzed by the N-terminal domain. In Bacillus cereus (strain ZK / E33L), this protein is Bifunctional protein GlmU.